The primary structure comprises 216 residues: MSEAYFRVESGALGPEENFLSLDDILMSHEKLPVRTETAMPRLGAFFLERSAGAETDNAVPQGSKLELPLWLAKGLFDNKRRILSVELPKIYQEGWRTVFSADPNVVDLHKMGPHFYGFGSQLLHFDSPENADISQSLLQTFIGRFRRIMDSSQNAYNEDTSALVARLDEMERGLFQIGQNGLNDFQCWEKGQASQITASNLVQNYKKRKFTDMED.

Residues 1–16 (MSEAYFRVESGALGPE) form a not essential for folding and stability of GINS complex, but may regulate accessibility to the central complex pore region.

Belongs to the GINS3/PSF3 family. As to quaternary structure, component of the GINS complex which is a heterotetramer of GINS1, GINS2, GINS3 and GINS4. Forms a stable subcomplex with GINS2. GINS complex interacts with DNA primase in vitro. Component of the CMG helicase complex, a hexameric ring of related MCM2-7 subunits stabilized by CDC45 and the tetrameric GINS complex.

The protein localises to the nucleus. The protein resides in the chromosome. In terms of biological role, required for correct functioning of the GINS complex, a complex that plays an essential role in the initiation of DNA replication, and progression of DNA replication forks. GINS complex is a core component of CDC45-MCM-GINS (CMG) helicase, the molecular machine that unwinds template DNA during replication, and around which the replisome is built. This chain is DNA replication complex GINS protein PSF3 (GINS3), found in Pongo abelii (Sumatran orangutan).